A 439-amino-acid chain; its full sequence is ATP-dependent RNA helicase RhlB (439 aa).

Residues 9–37 carry the Q motif motif; sequence QKFADLPLHPEVKQALAENGFEFCTPIQA. The Helicase ATP-binding domain occupies 40–219; that stretch reads LPVLLQSKDI…YDHMNEPVKV (180 aa). 53–60 contacts ATP; that stretch reads AQTGTGKT. A DEAD box motif is present at residues 165-168; sequence DEAD. Residues 243 to 390 enclose the Helicase C-terminal domain; that stretch reads KMRLLLTLIE…VSNYDRDALL (148 aa). Residues 395–439 are disordered; the sequence is PPVKIHRRHPAGARNLRERSGAGRPQGAHRSGGRPPRHDRTRRQP. The span at 425–439 shows a compositional bias: basic residues; it reads SGGRPPRHDRTRRQP.

Belongs to the DEAD box helicase family. RhlB subfamily. As to quaternary structure, component of the RNA degradosome, which is a multiprotein complex involved in RNA processing and mRNA degradation.

It is found in the cytoplasm. The enzyme catalyses ATP + H2O = ADP + phosphate + H(+). Functionally, DEAD-box RNA helicase involved in RNA degradation. Has RNA-dependent ATPase activity and unwinds double-stranded RNA. The polypeptide is ATP-dependent RNA helicase RhlB (Shewanella sp. (strain ANA-3)).